The following is a 78-amino-acid chain: UPF0291 protein LBUL_1264 (78 aa).

This sequence belongs to the UPF0291 family.

The protein resides in the cytoplasm. This is UPF0291 protein LBUL_1264 from Lactobacillus delbrueckii subsp. bulgaricus (strain ATCC BAA-365 / Lb-18).